The chain runs to 247 residues: Leucyl/phenylalanyl-tRNA--protein transferase (247 aa).

The protein belongs to the L/F-transferase family.

Its subcellular location is the cytoplasm. The catalysed reaction is N-terminal L-lysyl-[protein] + L-leucyl-tRNA(Leu) = N-terminal L-leucyl-L-lysyl-[protein] + tRNA(Leu) + H(+). The enzyme catalyses N-terminal L-arginyl-[protein] + L-leucyl-tRNA(Leu) = N-terminal L-leucyl-L-arginyl-[protein] + tRNA(Leu) + H(+). It carries out the reaction L-phenylalanyl-tRNA(Phe) + an N-terminal L-alpha-aminoacyl-[protein] = an N-terminal L-phenylalanyl-L-alpha-aminoacyl-[protein] + tRNA(Phe). Functionally, functions in the N-end rule pathway of protein degradation where it conjugates Leu, Phe and, less efficiently, Met from aminoacyl-tRNAs to the N-termini of proteins containing an N-terminal arginine or lysine. This chain is Leucyl/phenylalanyl-tRNA--protein transferase, found in Solidesulfovibrio magneticus (strain ATCC 700980 / DSM 13731 / RS-1) (Desulfovibrio magneticus).